The chain runs to 216 residues: MIMSLLDELKQAIIDGDEDIVAELSQKAVDEDLDLVDTVQSGLVKGIEVVGTAWKEGEMFLPDVMMSAEAMKVGLAILEPEIAKKGMSEGESKGKIVLGTVEGDIHDIGKNITGAMFTAAGYKVIDLGTDIKAEGFVAKAQEVGADIIGASALLTTTMIKQKELIEYLKEKNLRDSYKVLVGGGPTSQVWADEIGADGWAETADDAVELANKILGK.

A B12-binding N-terminal domain is found at 1 to 90 (MIMSLLDELK…EIAKKGMSEG (90 aa)). A B12-binding domain is found at 93 to 216 (KGKIVLGTVE…VELANKILGK (124 aa)). Methylcob(III)alamin is bound at residue His-106.

The protein belongs to the methylamine corrinoid protein family.

In terms of biological role, probably harbors a corrinoid prosthetic group and acts as a methyl group carrier between MtgB and MtgA. A methyl group from glycine betaine is likely first transferred to the corrinoid prosthetic group of the enzyme by MtgB, and then transferred to tetrahydrofolate (THF) by MtgA. The methyl group may then be ultimately converted to carbon dioxide, and its oxidation would also provide reducing equivalents for anaerobic respiration. Thus, may function in the pathway that allows anaerobic methylotrophic growth of D.hafniense using glycine betaine. This is Corrinoid protein DSY3155 from Desulfitobacterium hafniense (strain Y51).